Reading from the N-terminus, the 219-residue chain is MEHVVSAQLRSIVGNKRAVRRLRATGAIPAVAYGPGLEKPLSLVLNKTDFLKIFKHITESTPLTLVVKDENDKEVLKHLAFIKMVQYDKVTDEVKHVDFYVPEAHHKMRINVPIEIVGKAIGVEKGGIMEIIHHEVPVKALPDRVPEVIKIDVTNLELGETLRVKDVVLPEGVEIDMDDEDVLITVVVPRGLEVEETTTTETSNEPEVIKKGKKEEEEK.

Positions 195–219 (EETTTTETSNEPEVIKKGKKEEEEK) are disordered. Residues 197–206 (TTTTETSNEP) are compositionally biased toward low complexity. A compositionally biased stretch (basic and acidic residues) spans 207–219 (EVIKKGKKEEEEK).

The protein belongs to the bacterial ribosomal protein bL25 family. CTC subfamily. Part of the 50S ribosomal subunit; part of the 5S rRNA/L5/L18/L25 subcomplex. Contacts the 5S rRNA. Binds to the 5S rRNA independently of L5 and L18.

Its function is as follows. This is one of the proteins that binds to the 5S RNA in the ribosome where it forms part of the central protuberance. The polypeptide is Large ribosomal subunit protein bL25 (Fervidobacterium nodosum (strain ATCC 35602 / DSM 5306 / Rt17-B1)).